We begin with the raw amino-acid sequence, 296 residues long: Phosphoribosylaminoimidazole-succinocarboxamide synthase (296 aa).

Belongs to the SAICAR synthetase family.

The catalysed reaction is 5-amino-1-(5-phospho-D-ribosyl)imidazole-4-carboxylate + L-aspartate + ATP = (2S)-2-[5-amino-1-(5-phospho-beta-D-ribosyl)imidazole-4-carboxamido]succinate + ADP + phosphate + 2 H(+). Its pathway is purine metabolism; IMP biosynthesis via de novo pathway; 5-amino-1-(5-phospho-D-ribosyl)imidazole-4-carboxamide from 5-amino-1-(5-phospho-D-ribosyl)imidazole-4-carboxylate: step 1/2. The sequence is that of Phosphoribosylaminoimidazole-succinocarboxamide synthase from Trichlorobacter lovleyi (strain ATCC BAA-1151 / DSM 17278 / SZ) (Geobacter lovleyi).